A 274-amino-acid chain; its full sequence is Type III pantothenate kinase (274 aa).

6 to 13 (DVGNTNTV) contributes to the ATP binding site. Substrate contacts are provided by residues tyrosine 110 and 117–120 (GADR). Catalysis depends on aspartate 119, which acts as the Proton acceptor. Aspartate 139 lines the K(+) pocket. Threonine 142 serves as a coordination point for ATP. Threonine 194 contributes to the substrate binding site.

It belongs to the type III pantothenate kinase family. As to quaternary structure, homodimer. The cofactor is NH4(+). Requires K(+) as cofactor.

The protein localises to the cytoplasm. It catalyses the reaction (R)-pantothenate + ATP = (R)-4'-phosphopantothenate + ADP + H(+). It functions in the pathway cofactor biosynthesis; coenzyme A biosynthesis; CoA from (R)-pantothenate: step 1/5. Functionally, catalyzes the phosphorylation of pantothenate (Pan), the first step in CoA biosynthesis. The protein is Type III pantothenate kinase of Koribacter versatilis (strain Ellin345).